We begin with the raw amino-acid sequence, 356 residues long: Protein translocase subunit SecY (356 aa).

8 helical membrane passes run 24–44 (LFVI…IPGI), 77–97 (IFAL…LLTV), 125–145 (LVLA…MPGM), 154–174 (FAFY…LMWL), 183–203 (IGNG…PPAV), 217–237 (FLLL…VVFI), 274–294 (VIPA…ASWF), and 317–337 (YVLL…ALVF).

Belongs to the SecY/SEC61-alpha family. As to quaternary structure, component of the Sec protein translocase complex. Heterotrimer consisting of SecY, SecE and SecG subunits. The heterotrimers can form oligomers, although 1 heterotrimer is thought to be able to translocate proteins. Interacts with the ribosome. Interacts with SecDF, and other proteins may be involved. Interacts with SecA.

It is found in the cell membrane. The central subunit of the protein translocation channel SecYEG. Consists of two halves formed by TMs 1-5 and 6-10. These two domains form a lateral gate at the front which open onto the bilayer between TMs 2 and 7, and are clamped together by SecE at the back. The channel is closed by both a pore ring composed of hydrophobic SecY resides and a short helix (helix 2A) on the extracellular side of the membrane which forms a plug. The plug probably moves laterally to allow the channel to open. The ring and the pore may move independently. In Buchnera aphidicola subsp. Acyrthosiphon kondoi (Acyrthosiphon kondoi symbiotic bacterium), this protein is Protein translocase subunit SecY.